The primary structure comprises 350 residues: Methionine aminopeptidase 1D, chloroplastic/mitochondrial (350 aa).

A chloroplast and mitochondrion-targeting transit peptide spans 1 to 49 (MAGVKSLQPRLISSFLGNNSIRSTQPLIHLFRFDLGRRHVSMQLSRTFS). Gly50 is subject to N-acetylglycine. Positions 71 to 90 (RLRPGNVSPRRPVPGHITKP) are disordered. His180 is a binding site for substrate. The a divalent metal cation site is built by Asp197, Asp208, and His271. Residue His278 participates in substrate binding. A divalent metal cation-binding residues include Glu303 and Glu334.

The protein belongs to the peptidase M24A family. Methionine aminopeptidase type 1 subfamily. Requires Co(2+) as cofactor. Zn(2+) is required as a cofactor. Mn(2+) serves as cofactor. It depends on Fe(2+) as a cofactor. As to expression, ubiquitous. Preferentially expressed in green tissues.

It localises to the plastid. It is found in the chloroplast. The protein localises to the mitochondrion. The enzyme catalyses Release of N-terminal amino acids, preferentially methionine, from peptides and arylamides.. Its function is as follows. Removes the N-terminal methionine from nascent proteins. The N-terminal methionine is often cleaved when the second residue in the primary sequence is small and uncharged (Met-Ala-, Cys, Gly, Pro, Ser, Thr, or Val). The polypeptide is Methionine aminopeptidase 1D, chloroplastic/mitochondrial (MAP1D) (Arabidopsis thaliana (Mouse-ear cress)).